The sequence spans 211 residues: Urease accessory protein UreE (211 aa).

Residues 134–211 (FDPEGGAYAP…DHHGHGHEHK (78 aa)) are disordered. Positions 147-202 (PSHDHAGHDHAHDSHAHHDHDHGKHAQHDHGKHDHAHHDHAAHDDHHVHDEHCGHD) are enriched in basic and acidic residues.

The protein belongs to the UreE family.

The protein resides in the cytoplasm. Involved in urease metallocenter assembly. Binds nickel. Probably functions as a nickel donor during metallocenter assembly. The sequence is that of Urease accessory protein UreE from Rhodopseudomonas palustris (strain BisB18).